We begin with the raw amino-acid sequence, 514 residues long: MADSGLDKKSTKCPDCSSASQKDVLCVCSSKTRVPPVLVVEMSQTSSIGSAESLISLERKKEKNINRDITSRKDLPSRTSNVERKASQQQWGRGNFTEGKVPHIRIENGAAIEEIYTFGRILGKGSFGIVIEATDKETETKWAIKKVNKEKAGSSAVKLLEREVNILKSVKHEHIIHLEQVFETPKKMYLVMELCEDGELKEILDRKGHFSENETRWIIQSLASAIAYLHNNDIVHRDLKLENIMVKSSLIDDNNEINLNIKVTDFGLAVKKQSRSEAMLQATCGTPIYMAPEVISAHDYSQQCDIWSIGVVMYMLLRGEPPFLASSEEKLFELIRKGELHFENAVWNSISDCAKSVLKQLMKVDPAHRITAKELLDNQWLTGNKLSSVRPTNVLEMMKEWKNNPESVEENTTEEKNKPSTEEKLKSYQPWGNVPDANYTSDEEEEKQSTAYEKQFPATSKDNFDMCSSSFTSSKLLPAEIKGEMEKTPVTPSQGTATKYPAKSGALSRTKKKL.

Positions 65–86 are enriched in basic and acidic residues; sequence INRDITSRKDLPSRTSNVERKA. A disordered region spans residues 65–91; it reads INRDITSRKDLPSRTSNVERKASQQQW. The Protein kinase domain maps to 116–381; sequence YTFGRILGKG…AKELLDNQWL (266 aa). ATP is bound by residues 122-130 and K145; that span reads LGKGSFGIV. The active-site Proton acceptor is D238. 2 disordered regions span residues 402 to 468 and 485 to 514; these read KNNP…DMCS and MEKT…KKKL. The residue at position 407 (S407) is a Phosphoserine. A compositionally biased stretch (basic and acidic residues) spans 413–426; it reads TEEKNKPSTEEKLK. The segment covering 449-468 has biased composition (polar residues); that stretch reads STAYEKQFPATSKDNFDMCS.

Belongs to the protein kinase superfamily. CAMK Ser/Thr protein kinase family. CaMK subfamily. As to quaternary structure, homodimer. In terms of processing, autophosphorylated. As to expression, highly expressed in testis, fetal lung and heart, followed by pituitary gland, kidney, interventricular septum, pancreas, heart, trachea, thyroid gland and uterus. Weak hybridization signals were observed in the following tissues: amygdala, aorta, esophagus, colon ascending, colon transverse, skeletal muscle, spleen, peripheral blood leukocyte, lymph node, bone marrow, placenta, prostate, liver, salivary gland, mammary gland, some tumor cell lines, fetal brain, fetal liver, fetal spleen and fetal thymus. No signal at all was detectable in RNA from tissues of the nervous system.

The protein localises to the cytoplasm. It localises to the cytoskeleton. Its subcellular location is the perinuclear region. The enzyme catalyses L-seryl-[protein] + ATP = O-phospho-L-seryl-[protein] + ADP + H(+). It carries out the reaction L-threonyl-[protein] + ATP = O-phospho-L-threonyl-[protein] + ADP + H(+). With respect to regulation, specifically inhibited by CDD-2807 ((3-([1,1'-Biphenyl]-2-ylethynyl)-1H-indazol-5-yl)(2,6-diazaspiro[3.5]nonan-2-yl)methanone). Functionally, serine/threonine protein kinase required for spermatid differentiation and male fertility. Promotes sperm flagella assembly during spermatogenesis by mediating phosphorylation of fibrous sheath proteins AKAP3 and AKAP4. Also phosphorylates vimentin/VIM, thereby regulating the dynamic behavior of the intermediate filament cytoskeleton. In Homo sapiens (Human), this protein is Serine/threonine-protein kinase 33.